The primary structure comprises 874 residues: Alanine--tRNA ligase (874 aa).

Residues His562, His566, Cys665, and His669 each coordinate Zn(2+).

Belongs to the class-II aminoacyl-tRNA synthetase family. Zn(2+) serves as cofactor.

It is found in the cytoplasm. It carries out the reaction tRNA(Ala) + L-alanine + ATP = L-alanyl-tRNA(Ala) + AMP + diphosphate. Functionally, catalyzes the attachment of alanine to tRNA(Ala) in a two-step reaction: alanine is first activated by ATP to form Ala-AMP and then transferred to the acceptor end of tRNA(Ala). Also edits incorrectly charged Ser-tRNA(Ala) and Gly-tRNA(Ala) via its editing domain. This Pseudomonas aeruginosa (strain ATCC 15692 / DSM 22644 / CIP 104116 / JCM 14847 / LMG 12228 / 1C / PRS 101 / PAO1) protein is Alanine--tRNA ligase.